The primary structure comprises 258 residues: Small ribosomal subunit protein mS40 (258 aa).

Residues 1 to 35 constitute a mitochondrion transit peptide; that stretch reads MAASILNVLLRRLPGVSPFRGAYGVQVLLQTLCTK. The residue at position 49 (Ser-49) is a Phosphoserine. A disordered region spans residues 223-258; sequence RLREESGPPPELMPEVPLTAPAEASSTEPGAPQSAL.

It belongs to the bacterial ribosomal protein bS18 family. Mitochondrion-specific ribosomal protein mS40 subfamily. As to quaternary structure, component of the mitochondrial ribosome small subunit (28S) which comprises a 12S rRNA and about 30 distinct proteins.

It localises to the mitochondrion. This chain is Small ribosomal subunit protein mS40 (MRPS18B), found in Sus scrofa (Pig).